A 133-amino-acid polypeptide reads, in one-letter code: Transcription antitermination protein NusB (133 aa).

Belongs to the NusB family.

Functionally, involved in transcription antitermination. Required for transcription of ribosomal RNA (rRNA) genes. Binds specifically to the boxA antiterminator sequence of the ribosomal RNA (rrn) operons. The chain is Transcription antitermination protein NusB from Clostridium botulinum (strain Alaska E43 / Type E3).